Consider the following 550-residue polypeptide: Hydroxylamine reductase (550 aa).

[2Fe-2S] cluster is bound by residues Cys3, Cys6, Cys18, and Cys25. Hybrid [4Fe-2O-2S] cluster contacts are provided by His249, Glu273, Cys317, Cys405, Cys433, Cys458, Glu492, and Lys494. Cys405 is modified (cysteine persulfide).

Belongs to the HCP family. Requires [2Fe-2S] cluster as cofactor. Hybrid [4Fe-2O-2S] cluster is required as a cofactor.

The protein localises to the cytoplasm. The catalysed reaction is A + NH4(+) + H2O = hydroxylamine + AH2 + H(+). Its function is as follows. Catalyzes the reduction of hydroxylamine to form NH(3) and H(2)O. The chain is Hydroxylamine reductase from Escherichia coli O7:K1 (strain IAI39 / ExPEC).